Reading from the N-terminus, the 591-residue chain is MKKISLPKIGIRPVIDGRRMGVRESLEEQTMNMAKATAALLTEKLRHACGAAVECVISDTCIAGMAEAAACEEKFSSQNVGLTITVTPCWCYGSETIDMDPTRPKAIWGFNGTERPGAVYLAAALAAHSQKGIPAFSIYGHDVQDADDTSIPADVEEKLLRFARAGLAVASMKGKSYLSLGGVSMGIAGSIVDHNFFESWLGMKVQAVDMTELRRRIDQKIYDEAELEMALTWADKNFRYGEDENNKQYQRNAEQSRAVLRESLLMAMCIRDMMQGNSKLADIGRVEESLGYNAIAAGFQGQRHWTDQYPNGDTAEAILNSSFDWNGVREPFVVATENDSLNGVAMLMGHQLTGTAQVFADVRTYWSPEAIERVTGHKLDGLAEHGIIHLINSGSAALDGSCKQRDSEGNPTMKPHWEISQQEADACLAATEWCPAIHEYFRGGGYSSRFLTEGGVPFTMTRVNIIKGLGPVLQIAEGWSVELPKDVHDILNKRTNSTWPTTWFAPRLTGKGPFTDVYSVMANWGANHGVLTIGHVGADFITLASMLRIPVCMHNVEETKVYRPSAWAAHGMDIEGQDYRACQNYGPLYKR.

Catalysis depends on proton acceptor residues glutamate 337 and aspartate 361. Mn(2+) contacts are provided by glutamate 337, aspartate 361, and histidine 528.

This sequence belongs to the L-fucose isomerase family. In terms of assembly, homohexamer. It depends on Mn(2+) as a cofactor.

Its subcellular location is the cytoplasm. It catalyses the reaction L-fucose = L-fuculose. Its pathway is carbohydrate degradation; L-fucose degradation; L-lactaldehyde and glycerone phosphate from L-fucose: step 1/3. Its function is as follows. Converts the aldose L-fucose into the corresponding ketose L-fuculose. The polypeptide is L-fucose isomerase (Escherichia coli (strain 55989 / EAEC)).